The chain runs to 1188 residues: NF-X1-type zinc finger protein NFXL1 (1188 aa).

A compositionally biased stretch (basic and acidic residues) spans 1 to 15 (MSFQVRRDRSDDRSH). Disordered regions lie at residues 1–52 (MSFQ…ETLD) and 65–195 (QHNA…VAKE). Composition is skewed to polar residues over residues 19–34 (HQQT…SSVV) and 168–186 (ASGT…TRPV). Residues 223–279 (CMICYDKVGRSANIWSCSSCYSIFHINCIKRWARAPTSVDLLAEKNQGDNWRCPGCQ) form an RING-type; degenerate zinc finger. NF-X1-type zinc fingers lie at residues 335–353 (CPHV…PCKA), 390–409 (CGRH…PCQV), 454–473 (CGNH…DCDL), 513–532 (CRLH…PCLV), 572–607 (CGRH…PCQK), 611–630 (CGQH…PCLE), 668–686 (CGHS…PCST), 721–751 (CGMH…TCRQ), and 760–781 (CRHT…RCEF). One can recognise an R3H domain in the interval 894-963 (PKWVLAVEER…KRFTVVHVTA (70 aa)). Residues 1100–1188 (SDDSWGAEDS…VVDDWEKVCE (89 aa)) are disordered. Polar residues-rich tracts occupy residues 1126-1138 (AKSN…SVNR) and 1159-1169 (EESSSSKTTGK).

This sequence belongs to the NFX1 family. As to expression, expressed in seedlings, roots, stems, leaves, buds, flowers and siliques.

It localises to the nucleus. The protein operates within protein modification; protein ubiquitination. In terms of biological role, mediates E2-dependent ubiquitination. Confers resistance to osmotic stress such as high salinity. Promotes H(2)O(2) production. Negative regulator of some defense-related genes via an salicylic acid (SA)-dependent signaling pathway. Confers susceptibility to the compatible phytopathogen Pseudomonas syringae pv. tomato strain DC3000 (Pst DC3000). Mediates resistance to type A trichothecenes (phytotoxins produced by phytopathogenic fungi). The polypeptide is NF-X1-type zinc finger protein NFXL1 (NFXL1) (Arabidopsis thaliana (Mouse-ear cress)).